The primary structure comprises 278 residues: Polyamine aminopropyltransferase (278 aa).

Positions 5 to 238 constitute a PABS domain; that stretch reads ELWFTEQQTP…GLWSFTLGSK (234 aa). S-methyl-5'-thioadenosine is bound at residue glutamine 34. Spermidine-binding residues include histidine 65 and aspartate 89. S-methyl-5'-thioadenosine-binding positions include glutamate 109 and 140 to 141; that span reads DG. The active-site Proton acceptor is aspartate 158. A spermidine-binding site is contributed by 158–161; the sequence is DSTD. Residue proline 165 participates in S-methyl-5'-thioadenosine binding.

The protein belongs to the spermidine/spermine synthase family. Homodimer or homotetramer.

The protein resides in the cytoplasm. It catalyses the reaction S-adenosyl 3-(methylsulfanyl)propylamine + putrescine = S-methyl-5'-thioadenosine + spermidine + H(+). It functions in the pathway amine and polyamine biosynthesis; spermidine biosynthesis; spermidine from putrescine: step 1/1. In terms of biological role, catalyzes the irreversible transfer of a propylamine group from the amino donor S-adenosylmethioninamine (decarboxy-AdoMet) to putrescine (1,4-diaminobutane) to yield spermidine. The sequence is that of Polyamine aminopropyltransferase from Caldicellulosiruptor bescii (strain ATCC BAA-1888 / DSM 6725 / KCTC 15123 / Z-1320) (Anaerocellum thermophilum).